Consider the following 488-residue polypeptide: Cobyric acid synthase (488 aa).

In terms of domain architecture, GATase cobBQ-type spans 248–435 (VLKVVVPVLP…LHGLFESPAA (188 aa)). Cys-329 acts as the Nucleophile in catalysis. His-427 is a catalytic residue.

The protein belongs to the CobB/CobQ family. CobQ subfamily.

The protein operates within cofactor biosynthesis; adenosylcobalamin biosynthesis. Catalyzes amidations at positions B, D, E, and G on adenosylcobyrinic A,C-diamide. NH(2) groups are provided by glutamine, and one molecule of ATP is hydrogenolyzed for each amidation. This chain is Cobyric acid synthase, found in Pseudomonas fluorescens (strain Pf0-1).